The chain runs to 245 residues: Demethylmenaquinone methyltransferase (245 aa).

S-adenosyl-L-methionine is bound by residues Thr-69, Asp-90, and 118–119 (DC).

This sequence belongs to the class I-like SAM-binding methyltransferase superfamily. MenG/UbiE family.

The catalysed reaction is a 2-demethylmenaquinol + S-adenosyl-L-methionine = a menaquinol + S-adenosyl-L-homocysteine + H(+). The protein operates within quinol/quinone metabolism; menaquinone biosynthesis; menaquinol from 1,4-dihydroxy-2-naphthoate: step 2/2. Methyltransferase required for the conversion of demethylmenaquinol (DMKH2) to menaquinol (MKH2). This chain is Demethylmenaquinone methyltransferase, found in Porphyromonas gingivalis (strain ATCC 33277 / DSM 20709 / CIP 103683 / JCM 12257 / NCTC 11834 / 2561).